The primary structure comprises 500 residues: NAD(P)H-quinone oxidoreductase chain 4, chloroplastic (500 aa).

The next 14 helical transmembrane spans lie at 4–24 (FYWLTIIVVLPISAGSLIALL), 37–57 (ICICLFELLLTTYVFCYHFQL), 80–100 (LGIDGLSIGPILLTGFITTLA), 113–130 (LFHFLMLAMYSGQIGLFS), 134–154 (LLLFFIMWELELIPVYLLLSM), 167–187 (FILYTAGGSIFLLMGVLGMGL), 208–228 (ALEIIFYFGFLIAYAVKSPII), 242–262 (HYSTCMLLAGILLKMGAYGLV), 272–292 (AHSIFSPWLMIVGTIQIIYAA), 305–325 (IAYSSVSHMGFIIIGISSITD), 330–350 (GAILQIISHGFIGAALFFLAG), 386–406 (LALPGMSGFVAELVIFLGIIT), 416–436 (ILITFVMAIGMILTPIYSLSM), and 462–482 (IFILICILLPIIGIGIYPDFV).

This sequence belongs to the complex I subunit 4 family.

The protein localises to the plastid. It localises to the chloroplast thylakoid membrane. It catalyses the reaction a plastoquinone + NADH + (n+1) H(+)(in) = a plastoquinol + NAD(+) + n H(+)(out). The enzyme catalyses a plastoquinone + NADPH + (n+1) H(+)(in) = a plastoquinol + NADP(+) + n H(+)(out). The polypeptide is NAD(P)H-quinone oxidoreductase chain 4, chloroplastic (Nuphar advena (Common spatterdock)).